The chain runs to 385 residues: Probable thioesterase PNKD (385 aa).

The segment covering 32–42 (KASQNRTRALQ) has biased composition (polar residues). Residues 32 to 56 (KASQNRTRALQSHSSPECKEEPEPL) are disordered. Residue valine 121 is modified to Phosphoserine. Residues histidine 172, histidine 174, aspartate 176, histidine 177, histidine 229, aspartate 253, and histidine 291 each coordinate Zn(2+).

This sequence belongs to the metallo-beta-lactamase superfamily. Glyoxalase II family. Isoform 2 interacts with the sarcomeric proteins, MRLC2, MYOM1 and ENO3. Requires Zn(2+) as cofactor. In terms of processing, undergoes cleavage at the N-terminus. As to expression, expressed in many discrete areas of the brain.

The protein resides in the cell membrane. The protein localises to the mitochondrion. It is found in the cytoplasm. It catalyses the reaction a thioester + H2O = a thiol + a carboxylate + H(+). Probable thioesterase that may play a role in cellular detoxification processes; it likely acts on a yet-unknown alpha-hydroxythioester substrate. In vitro, it is able to catalyze the hydrolysis of S-D-lactoyl-glutathione to form glutathione and D-lactic acid at very low rate, though this reaction is not physiologically relevant in vivo. The protein is Probable thioesterase PNKD (Pnkd) of Mus musculus (Mouse).